Here is a 176-residue protein sequence, read N- to C-terminus: Acireductone dioxygenase (176 aa).

H100, H102, E106, and H145 together coordinate Fe(2+). Residues H100, H102, E106, and H145 each contribute to the Ni(2+) site.

The protein belongs to the acireductone dioxygenase (ARD) family. In terms of assembly, monomer. Requires Fe(2+) as cofactor. Ni(2+) serves as cofactor.

It carries out the reaction 1,2-dihydroxy-5-(methylsulfanyl)pent-1-en-3-one + O2 = 3-(methylsulfanyl)propanoate + CO + formate + 2 H(+). It catalyses the reaction 1,2-dihydroxy-5-(methylsulfanyl)pent-1-en-3-one + O2 = 4-methylsulfanyl-2-oxobutanoate + formate + 2 H(+). It participates in amino-acid biosynthesis; L-methionine biosynthesis via salvage pathway; L-methionine from S-methyl-5-thio-alpha-D-ribose 1-phosphate: step 5/6. In terms of biological role, catalyzes 2 different reactions between oxygen and the acireductone 1,2-dihydroxy-3-keto-5-methylthiopentene (DHK-MTPene) depending upon the metal bound in the active site. Fe-containing acireductone dioxygenase (Fe-ARD) produces formate and 2-keto-4-methylthiobutyrate (KMTB), the alpha-ketoacid precursor of methionine in the methionine recycle pathway. Ni-containing acireductone dioxygenase (Ni-ARD) produces methylthiopropionate, carbon monoxide and formate, and does not lie on the methionine recycle pathway. The sequence is that of Acireductone dioxygenase from Bacillus pumilus (strain SAFR-032).